Reading from the N-terminus, the 150-residue chain is MVLCFPLLLLLLVLWGPVCPLHAWPKRLTKAHWFEIQHIQPSPLQCNRAMIGINNYTQHCKHQNTFLHDSFQNVAAVCDLLSIVCKNRRHNCHQSSKPVNMTDCRLTSGKYPQCRYSAAAQYKFFIVACDPPQKSDPPYKLVPVHLDSIL.

The first 23 residues, 1–23, serve as a signal peptide directing secretion; sequence MVLCFPLLLLLLVLWGPVCPLHA. The Proton acceptor role is filled by histidine 38. Intrachain disulfides connect cysteine 46-cysteine 104, cysteine 60-cysteine 114, cysteine 78-cysteine 129, and cysteine 85-cysteine 92. Asparagine 55 is a glycosylation site (N-linked (GlcNAc...) asparagine). Residues 61 to 65 and lysine 86 contribute to the substrate site; that span reads KHQNT. Asparagine 100 carries an N-linked (GlcNAc...) asparagine glycan. Residue arginine 105 participates in substrate binding. Histidine 145 (proton donor) is an active-site residue.

It belongs to the pancreatic ribonuclease family. In terms of assembly, interacts (via N-terminus) with bacterial lipopolysaccharide (LPS).

The protein resides in the secreted. It localises to the lysosome. It is found in the cytoplasmic granule. Its function is as follows. Ribonuclease which shows a preference for the pyrimidines uridine and cytosine. Has potent antibacterial activity against a range of Gram-positive and Gram-negative bacteria, including P.aeruginosa, A.baumanii, M.luteus, S.aureus, E.faecalis, E.faecium, S.saprophyticus and E.coli. Causes loss of bacterial membrane integrity, and also promotes agglutination of Gram-negative bacteria. Probably contributes to urinary tract sterility. Bactericidal activity is independent of RNase activity. This chain is Ribonuclease K6 (RNASE6), found in Gorilla gorilla gorilla (Western lowland gorilla).